A 60-amino-acid chain; its full sequence is Large ribosomal subunit protein bL32 (60 aa).

The protein belongs to the bacterial ribosomal protein bL32 family.

The polypeptide is Large ribosomal subunit protein bL32 (Streptococcus pneumoniae serotype 19F (strain G54)).